The chain runs to 342 residues: N-acetyl-gamma-glutamyl-phosphate reductase (342 aa).

C149 is an active-site residue.

Belongs to the NAGSA dehydrogenase family. Type 1 subfamily.

The protein localises to the cytoplasm. The catalysed reaction is N-acetyl-L-glutamate 5-semialdehyde + phosphate + NADP(+) = N-acetyl-L-glutamyl 5-phosphate + NADPH + H(+). It functions in the pathway amino-acid biosynthesis; L-arginine biosynthesis; N(2)-acetyl-L-ornithine from L-glutamate: step 3/4. In terms of biological role, catalyzes the NADPH-dependent reduction of N-acetyl-5-glutamyl phosphate to yield N-acetyl-L-glutamate 5-semialdehyde. This chain is N-acetyl-gamma-glutamyl-phosphate reductase, found in Cereibacter sphaeroides (strain ATCC 17029 / ATH 2.4.9) (Rhodobacter sphaeroides).